The following is an 817-amino-acid chain: Dynamin-related protein 5A (817 aa).

Over residues Met-1–Asn-20 the composition is skewed to polar residues. A disordered region spans residues Met-1–Ala-37. The Dynamin-type G domain occupies Lys-59–Pro-346. Positions Gly-69 to Ser-76 are G1 motif. Gly-69–Ser-76 is a GTP binding site. Residues Gly-95–Arg-97 form a G2 motif region. The G3 motif stretch occupies residues Asp-175 to Gly-178. Residues Asp-175–Phe-179 and Ser-244–Asp-247 contribute to the GTP site. Residues Ser-244–Asp-247 form a G4 motif region. The tract at residues Leu-280–Asp-283 is G5 motif. 2 disordered regions span residues Ala-405–Trp-425 and Leu-616–Ser-658. Residues Asp-618–Glu-629 show a composition bias toward basic and acidic residues.

Belongs to the TRAFAC class dynamin-like GTPase superfamily. Dynamin/Fzo/YdjA family. In terms of tissue distribution, expressed in root and leaf meristems.

The protein localises to the cytoplasm. It is found in the cytoskeleton. The protein resides in the phragmoplast. Its function is as follows. Probable microtubule-associated force-producing protein that is targeted to the forming cell plate during cytokinesis. May play a role in cell division. This Arabidopsis thaliana (Mouse-ear cress) protein is Dynamin-related protein 5A (DRP5A).